The primary structure comprises 396 residues: Acetate kinase (396 aa).

Mg(2+) is bound at residue asparagine 7. Lysine 14 contacts ATP. Arginine 88 lines the substrate pocket. Aspartate 145 (proton donor/acceptor) is an active-site residue. ATP contacts are provided by residues 205–209 (HLGNG), 279–281 (DFR), and 327–331 (GIGEN). Glutamate 381 contacts Mg(2+).

This sequence belongs to the acetokinase family. In terms of assembly, homodimer. The cofactor is Mg(2+). Mn(2+) is required as a cofactor.

It is found in the cytoplasm. It catalyses the reaction acetate + ATP = acetyl phosphate + ADP. It participates in metabolic intermediate biosynthesis; acetyl-CoA biosynthesis; acetyl-CoA from acetate: step 1/2. Its function is as follows. Catalyzes the formation of acetyl phosphate from acetate and ATP. Can also catalyze the reverse reaction. This chain is Acetate kinase, found in Campylobacter jejuni (strain RM1221).